The primary structure comprises 450 residues: Na(+)/H(+) antiporter NhaA (450 aa).

The next 11 helical transmembrane spans lie at 24-44 (FFAI…LALV), 75-95 (LILW…GLEI), 111-131 (ALPI…YLAL), 140-160 (GWGV…SLLG), 169-189 (VFLT…IAFF), 196-216 (FSFL…NWLG), 224-244 (LLVG…ATIA), 318-338 (WVAW…TVSA), 352-372 (IFFG…WLLV), 390-410 (GIGW…TLAF), and 422-442 (SILC…RVLL).

This sequence belongs to the NhaA Na(+)/H(+) (TC 2.A.33) antiporter family.

The protein localises to the cell inner membrane. The enzyme catalyses Na(+)(in) + 2 H(+)(out) = Na(+)(out) + 2 H(+)(in). Its function is as follows. Na(+)/H(+) antiporter that extrudes sodium in exchange for external protons. In Oleidesulfovibrio alaskensis (strain ATCC BAA-1058 / DSM 17464 / G20) (Desulfovibrio alaskensis), this protein is Na(+)/H(+) antiporter NhaA.